Here is a 232-residue protein sequence, read N- to C-terminus: F420-dependent NADP reductase (232 aa).

NADP(+)-binding positions include 15 to 18 (TGDQ), 37 to 38 (SR), Lys42, Val80, Val106, and Ala151.

It belongs to the F420-dependent NADP reductase family. In terms of assembly, homotetramer.

The catalysed reaction is reduced coenzyme F420-(gamma-L-Glu)(n) + NADP(+) = oxidized coenzyme F420-(gamma-L-Glu)(n) + NADPH + 2 H(+). Its function is as follows. Catalyzes the reduction of NADP(+) with F420H(2) via hydride transfer, and likely the reverse reaction, i.e. the reduction of F420 with NADPH. Probably functions in the regeneration of NADPH required in biosynthetic reactions. Is specific for reduced F420 as electron donor for the reduction of NADP; neither reduced FAD nor FMN can act as electron donor. The enzyme is also specific for NADP; NAD is not utilized as substrate. In Methanothermobacter thermautotrophicus (strain ATCC 29096 / DSM 1053 / JCM 10044 / NBRC 100330 / Delta H) (Methanobacterium thermoautotrophicum), this protein is F420-dependent NADP reductase (fno).